The following is a 165-amino-acid chain: MAENFSFDVVSDFDRQELVNALDQVKREISQRYDLKGTDTSLDLEKDNIFITTNSELTLNSVIDIIRQKAIKRKLSIKIFDFNSIEVVSGNKVKQTITLKKGLNQEIAKKISKNIRDEIKKINVSINGETLRVMSKSKNDLQLAIKLLENLEETYKIPLQTNNYR.

It belongs to the YajQ family.

Nucleotide-binding protein. The protein is Nucleotide-binding protein PMM0481 of Prochlorococcus marinus subsp. pastoris (strain CCMP1986 / NIES-2087 / MED4).